A 471-amino-acid chain; its full sequence is Ribulose bisphosphate carboxylase large chain 2 (471 aa).

Substrate contacts are provided by asparagine 116 and threonine 166. Residue lysine 168 is the Proton acceptor of the active site. Position 170 (lysine 170) interacts with substrate. Residues lysine 194, aspartate 196, and glutamate 197 each coordinate Mg(2+). Lysine 194 carries the post-translational modification N6-carboxylysine. Catalysis depends on histidine 287, which acts as the Proton acceptor. Residues arginine 288, histidine 320, and serine 372 each contribute to the substrate site.

It belongs to the RuBisCO large chain family. Type I subfamily. In terms of assembly, heterohexadecamer of 8 large chains and 8 small chains. Forms a CsoS2-CsoS1-RuBisCO complex. Mg(2+) is required as a cofactor.

It localises to the carboxysome. It catalyses the reaction 2 (2R)-3-phosphoglycerate + 2 H(+) = D-ribulose 1,5-bisphosphate + CO2 + H2O. The catalysed reaction is D-ribulose 1,5-bisphosphate + O2 = 2-phosphoglycolate + (2R)-3-phosphoglycerate + 2 H(+). RuBisCO catalyzes two reactions: the carboxylation of D-ribulose 1,5-bisphosphate, the primary event in carbon dioxide fixation, as well as the oxidative fragmentation of the pentose substrate. Both reactions occur simultaneously and in competition at the same active site. Replacing the endogenous type I ccbLS genes in H.neapolitanus with this carboxysomally targeted enzyme reconstitutes RuBisCO with about 25% of normal activity; the active enzyme is targeted to carboxysomes. This Hydrogenovibrio crunogenus (strain DSM 25203 / XCL-2) (Thiomicrospira crunogena) protein is Ribulose bisphosphate carboxylase large chain 2.